A 576-amino-acid polypeptide reads, in one-letter code: 4-alpha-glucanotransferase DPE1, chloroplastic/amyloplastic (576 aa).

The transit peptide at 1–45 directs the protein to the chloroplast; that stretch reads MSILLRPSSSPSLCSSLKLFRLSSPDSLIDAAVLRNRTKPSQSFR.

This sequence belongs to the disproportionating enzyme family.

It is found in the plastid. Its subcellular location is the chloroplast. The protein localises to the amyloplast. The enzyme catalyses Transfers a segment of a (1-&gt;4)-alpha-D-glucan to a new position in an acceptor, which may be glucose or a (1-&gt;4)-alpha-D-glucan.. Chloroplastic alpha-glucanotransferase involved in maltotriose metabolism. Probably uses maltotriose as substrate to transfer a maltosyl unit from one molecule to another, resulting in glucose and maltopentaose. The latter can then be further metabolized to maltose and maltotriose by beta-amylase. Required for normal starch degradation in leaves. The protein is 4-alpha-glucanotransferase DPE1, chloroplastic/amyloplastic (DPE1) of Arabidopsis thaliana (Mouse-ear cress).